The sequence spans 272 residues: Ribosomal RNA small subunit methyltransferase A (272 aa).

His-10, Leu-12, Gly-37, Glu-57, Asp-82, and Asn-98 together coordinate S-adenosyl-L-methionine.

Belongs to the class I-like SAM-binding methyltransferase superfamily. rRNA adenine N(6)-methyltransferase family. RsmA subfamily.

The protein resides in the cytoplasm. It catalyses the reaction adenosine(1518)/adenosine(1519) in 16S rRNA + 4 S-adenosyl-L-methionine = N(6)-dimethyladenosine(1518)/N(6)-dimethyladenosine(1519) in 16S rRNA + 4 S-adenosyl-L-homocysteine + 4 H(+). Specifically dimethylates two adjacent adenosines (A1518 and A1519) in the loop of a conserved hairpin near the 3'-end of 16S rRNA in the 30S particle. May play a critical role in biogenesis of 30S subunits. The chain is Ribosomal RNA small subunit methyltransferase A from Gloeobacter violaceus (strain ATCC 29082 / PCC 7421).